The sequence spans 469 residues: Ribosomal protein uS12 methylthiotransferase RimO (469 aa).

Residues N34–P144 form the MTTase N-terminal domain. [4Fe-4S] cluster is bound by residues C43, C79, C108, C176, C180, and C183. The 238-residue stretch at L162–A399 folds into the Radical SAM core domain. One can recognise a TRAM domain in the interval Q402–R468.

This sequence belongs to the methylthiotransferase family. RimO subfamily. [4Fe-4S] cluster is required as a cofactor.

Its subcellular location is the cytoplasm. The enzyme catalyses L-aspartate(89)-[ribosomal protein uS12]-hydrogen + (sulfur carrier)-SH + AH2 + 2 S-adenosyl-L-methionine = 3-methylsulfanyl-L-aspartate(89)-[ribosomal protein uS12]-hydrogen + (sulfur carrier)-H + 5'-deoxyadenosine + L-methionine + A + S-adenosyl-L-homocysteine + 2 H(+). Functionally, catalyzes the methylthiolation of an aspartic acid residue of ribosomal protein uS12. The chain is Ribosomal protein uS12 methylthiotransferase RimO from Vibrio vulnificus (strain CMCP6).